We begin with the raw amino-acid sequence, 310 residues long: Glycerol-3-phosphate dehydrogenase [NAD(P)+] (310 aa).

Positions 19, 39, 40, and 87 each coordinate NADPH. Sn-glycerol 3-phosphate is bound by residues Lys87 and Gly115. An NADPH-binding site is contributed by Ser119. Sn-glycerol 3-phosphate-binding residues include Lys170, Asp223, Ser233, Arg234, and Asn235. Residue Lys170 is the Proton acceptor of the active site. Position 234 (Arg234) interacts with NADPH. Glu260 contacts NADPH.

The protein belongs to the NAD-dependent glycerol-3-phosphate dehydrogenase family.

It localises to the cytoplasm. It catalyses the reaction sn-glycerol 3-phosphate + NAD(+) = dihydroxyacetone phosphate + NADH + H(+). The catalysed reaction is sn-glycerol 3-phosphate + NADP(+) = dihydroxyacetone phosphate + NADPH + H(+). It functions in the pathway membrane lipid metabolism; glycerophospholipid metabolism. Its function is as follows. Catalyzes the reduction of the glycolytic intermediate dihydroxyacetone phosphate (DHAP) to sn-glycerol 3-phosphate (G3P), the key precursor for phospholipid synthesis. This chain is Glycerol-3-phosphate dehydrogenase [NAD(P)+], found in Synechococcus sp. (strain JA-3-3Ab) (Cyanobacteria bacterium Yellowstone A-Prime).